The following is a 362-amino-acid chain: Ferrochelatase (362 aa).

Positions 228 and 309 each coordinate Fe cation.

It belongs to the ferrochelatase family.

It localises to the cytoplasm. It carries out the reaction heme b + 2 H(+) = protoporphyrin IX + Fe(2+). The protein operates within porphyrin-containing compound metabolism; protoheme biosynthesis; protoheme from protoporphyrin-IX: step 1/1. Its function is as follows. Catalyzes the ferrous insertion into protoporphyrin IX. The protein is Ferrochelatase of Bordetella pertussis (strain Tohama I / ATCC BAA-589 / NCTC 13251).